A 539-amino-acid chain; its full sequence is Effector protein hopAB1 (539 aa).

4 disordered regions span residues 1-93, 163-220, 230-249, and 315-336; these read MPGI…PEAQ, QTVR…RHPQ, ASAARHNHSANQTNEALRRL, and RQTTTNSPELPPLASSAESGRR. A compositionally biased stretch (basic and acidic residues) spans 18–31; it reads TDGEPVTEREHDSS. Positions 181–194 are enriched in low complexity; the sequence is SSSGSSQRSLIGRS.

This sequence belongs to the HopAB family.

The protein localises to the secreted. Functionally, effector protein that plays different roles depending on the species and plant cultivars that interact with the pathogen. Acts as a virulence determinant by enhancing the development of disease symptoms and bacterial growth. Acts as an avirulence factor by eliciting hypersensitive response (HR) and plant resistance. This is Effector protein hopAB1 (hopAB1) from Pseudomonas savastanoi pv. phaseolicola (strain 1448A / Race 6) (Pseudomonas syringae pv. phaseolicola (strain 1448A / Race 6)).